Consider the following 73-residue polypeptide: uncharacterized protein (73 aa).

It belongs to the asfivirus I73R family.

The protein resides in the virion. This is an uncharacterized protein from Ornithodoros (relapsing fever ticks).